The primary structure comprises 337 residues: DNA-directed RNA polymerase subunit alpha (337 aa).

Positions 1–231 are alpha N-terminal domain (alpha-NTD); it reads MRNITTSAYT…KQLSVFDKIT (231 aa). The segment at 247 to 337 is alpha C-terminal domain (alpha-CTD); it reads ENTKLLQNIT…IAELKAQNEG (91 aa).

This sequence belongs to the RNA polymerase alpha chain family. As to quaternary structure, homodimer. The RNAP catalytic core consists of 2 alpha, 1 beta, 1 beta' and 1 omega subunit. When a sigma factor is associated with the core the holoenzyme is formed, which can initiate transcription.

The enzyme catalyses RNA(n) + a ribonucleoside 5'-triphosphate = RNA(n+1) + diphosphate. In terms of biological role, DNA-dependent RNA polymerase catalyzes the transcription of DNA into RNA using the four ribonucleoside triphosphates as substrates. This Campylobacter jejuni subsp. jejuni serotype O:2 (strain ATCC 700819 / NCTC 11168) protein is DNA-directed RNA polymerase subunit alpha.